A 406-amino-acid chain; its full sequence is Type IV pilus assembly protein PilC (406 aa).

4 helical membrane passes run 69-91 (IFSRQLATMLGAGLTLLQALAIL), 171-191 (YPVIVFVFAVGVAYFLLTGIV), 211-231 (FLIAVSDLLRAATLPLLLLAV), and 377-397 (MIIFLGVIVGMIVAGMFLPLF).

Belongs to the GSP F family. As to quaternary structure, homotetramer. Interacts with PilB.

It localises to the cell inner membrane. Functionally, essential inner membrane component of the type IV pilus (T4P) that plays a role in surface and host cell adhesion, colonization, biofilm maturation, virulence, and twitching, a form of surface-associated motility facilitated by cycles of extension, adhesion, and retraction of T4P fibers. Controls both pilus assembly and disassembly and plays an important role in PilB localization to the complex and ATPase activity. This is Type IV pilus assembly protein PilC from Thermus thermophilus (strain ATCC 27634 / DSM 579 / HB8).